Reading from the N-terminus, the 130-residue chain is MGDYIVVLEAPIIVREVESADDAINVAVSKVAKALNKEKLDFVRVEIGYSQCPVCGSPFESAFVIGNVGLVGIYLTLKVFNAQSLEHAERIAKAVVGKALKKVPLKVFEIKEFHDGKEEGIELNNHKNEF.

This sequence belongs to the UPF0212 family.

This is UPF0212 protein TSIB_1358 from Thermococcus sibiricus (strain DSM 12597 / MM 739).